The sequence spans 471 residues: ATP synthase subunit beta (471 aa).

159–166 (GGAGVGKT) serves as a coordination point for ATP.

It belongs to the ATPase alpha/beta chains family. In terms of assembly, F-type ATPases have 2 components, CF(1) - the catalytic core - and CF(0) - the membrane proton channel. CF(1) has five subunits: alpha(3), beta(3), gamma(1), delta(1), epsilon(1). CF(0) has four main subunits: a(1), b(1), b'(1) and c(9-12).

It localises to the cell membrane. The catalysed reaction is ATP + H2O + 4 H(+)(in) = ADP + phosphate + 5 H(+)(out). Functionally, produces ATP from ADP in the presence of a proton gradient across the membrane. The catalytic sites are hosted primarily by the beta subunits. In Heliobacterium modesticaldum (strain ATCC 51547 / Ice1), this protein is ATP synthase subunit beta.